A 520-amino-acid polypeptide reads, in one-letter code: 3-phosphoshikimate 1-carboxyvinyltransferase, chloroplastic (520 aa).

The N-terminal 76 residues, 1–76, are a transit peptide targeting the chloroplast; that stretch reads MAQISSMAQG…RISASVATAE (76 aa). The 3-phosphoshikimate site is built by K99, S100, and R104. A phosphoenolpyruvate-binding site is contributed by K99. The phosphoenolpyruvate site is built by G177 and R207. Residues S254, S255, Q256, S282, D407, and K434 each coordinate 3-phosphoshikimate. Residue Q256 participates in phosphoenolpyruvate binding. Residue D407 is the Proton acceptor of the active site. Phosphoenolpyruvate-binding residues include R438, R480, and K505.

Belongs to the EPSP synthase family.

It is found in the plastid. The protein localises to the chloroplast. It catalyses the reaction 3-phosphoshikimate + phosphoenolpyruvate = 5-O-(1-carboxyvinyl)-3-phosphoshikimate + phosphate. It functions in the pathway metabolic intermediate biosynthesis; chorismate biosynthesis; chorismate from D-erythrose 4-phosphate and phosphoenolpyruvate: step 6/7. Functionally, catalyzes the transfer of the enolpyruvyl moiety of phosphoenolpyruvate (PEP) to the 5-hydroxyl of shikimate-3-phosphate (S3P) to produce enolpyruvyl shikimate-3-phosphate and inorganic phosphate. The sequence is that of 3-phosphoshikimate 1-carboxyvinyltransferase, chloroplastic from Solanum lycopersicum (Tomato).